A 1250-amino-acid chain; its full sequence is Ras-associated and pleckstrin homology domains-containing protein 1 (1250 aa).

Residue M1 is modified to N-acetylmethionine. Positions M1–D23 are enriched in acidic residues. Residues M1–K26 form a disordered region. S5, S17, S54, S150, S192, S203, and S205 each carry phosphoserine. The interval T179–S217 is disordered. A compositionally biased stretch (low complexity) spans H202–S217. The 87-residue stretch at K269–E355 folds into the Ras-associating domain. A PH domain is found at V396–Y505. A phosphotyrosine; by ABL1 mark is found at Y426 and Y456. A compositionally biased stretch (low complexity) spans K535–S551. Disordered regions lie at residues K535 to Q570, E588 to M663, N675 to N1036, A1050 to Q1162, and K1176 to W1250. Residues N552–Q570 show a composition bias toward polar residues. The segment covering E588–S597 has biased composition (basic and acidic residues). The residue at position 610 (S610) is a Phosphoserine. The segment covering P624–P650 has biased composition (pro residues). A compositionally biased stretch (low complexity) spans S651–P662. 2 stretches are compositionally biased toward pro residues: residues G707–P721 and P760–P781. A compositionally biased stretch (low complexity) spans T791–A802. Pro residues-rich tracts occupy residues P803–K814 and Y823–L840. At S827 the chain carries Phosphoserine. Phosphothreonine is present on T830. Phosphoserine occurs at positions 845, 853, and 894. The span at I909–S947 shows a compositional bias: pro residues. Residues P948–G968 show a composition bias toward low complexity. S965 bears the Phosphoserine mark. T974 carries the phosphothreonine modification. Polar residues predominate over residues Q976–G986. Residues S996 and S1012 each carry the phosphoserine modification. 2 stretches are compositionally biased toward pro residues: residues L1018 to P1027 and P1065 to E1088. 2 stretches are compositionally biased toward polar residues: residues T1131 to M1144 and V1151 to V1161. S1183 is modified (phosphoserine). Position 1226 is a phosphotyrosine; by ABL1 (Y1226). The span at P1238–W1250 shows a compositional bias: basic and acidic residues.

Belongs to the MRL family. As to quaternary structure, interacts with EVL and VASP and targets them to the leading edge. Interacts (via Ras associating and PH domains) with RAC1. In terms of tissue distribution, isoform RMO1-RAPH1 is ubiquitously expressed with highest levels in brain, heart, ovary and developing embryo. Isoform RMO1 is widely expressed with highest levels in liver. Low expression in B-cells.

The protein resides in the cell membrane. It localises to the cell projection. It is found in the lamellipodium. The protein localises to the filopodium. Its subcellular location is the cytoplasm. The protein resides in the cytoskeleton. Functionally, mediator of localized membrane signals. Implicated in the regulation of lamellipodial dynamics. Negatively regulates cell adhesion. The chain is Ras-associated and pleckstrin homology domains-containing protein 1 (RAPH1) from Homo sapiens (Human).